The following is a 326-amino-acid chain: Phosphate acyltransferase (326 aa).

The protein belongs to the PlsX family. As to quaternary structure, homodimer. Probably interacts with PlsY.

It is found in the cytoplasm. The enzyme catalyses a fatty acyl-[ACP] + phosphate = an acyl phosphate + holo-[ACP]. Its pathway is lipid metabolism; phospholipid metabolism. Catalyzes the reversible formation of acyl-phosphate (acyl-PO(4)) from acyl-[acyl-carrier-protein] (acyl-ACP). This enzyme utilizes acyl-ACP as fatty acyl donor, but not acyl-CoA. In Petrotoga mobilis (strain DSM 10674 / SJ95), this protein is Phosphate acyltransferase.